The following is a 508-amino-acid chain: Cobyric acid synthase (508 aa).

In terms of domain architecture, GATase cobBQ-type spans 255–454; it reads ELNIAVLKLP…LHGVFESGPW (200 aa). Cys336 acts as the Nucleophile in catalysis. His446 is a catalytic residue.

Belongs to the CobB/CobQ family. CobQ subfamily.

Its pathway is cofactor biosynthesis; adenosylcobalamin biosynthesis. Its function is as follows. Catalyzes amidations at positions B, D, E, and G on adenosylcobyrinic A,C-diamide. NH(2) groups are provided by glutamine, and one molecule of ATP is hydrogenolyzed for each amidation. This Synechococcus sp. (strain CC9311) protein is Cobyric acid synthase.